The following is a 66-amino-acid chain: DNA-directed RNA polymerase subunit Rpo10 (66 aa).

4 residues coordinate Zn(2+): Cys7, Cys10, Cys44, and Cys45.

This sequence belongs to the archaeal Rpo10/eukaryotic RPB10 RNA polymerase subunit family. Part of the RNA polymerase complex. Requires Zn(2+) as cofactor.

It is found in the cytoplasm. The catalysed reaction is RNA(n) + a ribonucleoside 5'-triphosphate = RNA(n+1) + diphosphate. DNA-dependent RNA polymerase (RNAP) catalyzes the transcription of DNA into RNA using the four ribonucleoside triphosphates as substrates. In Sulfurisphaera tokodaii (strain DSM 16993 / JCM 10545 / NBRC 100140 / 7) (Sulfolobus tokodaii), this protein is DNA-directed RNA polymerase subunit Rpo10.